The sequence spans 476 residues: Protein PAL OF QUIRKY (476 aa).

Residues 1–14 (MTTVSSAFATVAEG) form the signal peptide. The segment at 204–256 (TRRTNSGTSGSGDGNGGICGQESMMLETNSSFGSTSSSVSSSNLPPIKSSGED) is disordered. The segment covering 212 to 222 (SGSGDGNGGIC) has biased composition (gly residues). Residues 233–252 (SSFGSTSSSVSSSNLPPIKS) are compositionally biased toward low complexity.

Homodimer. Interacts with QKY and SUB/SCM at the plasma membrane. As to expression, observed in seedlings, roots, shoots, leaves, stems, inflorescence and flowers.

The protein resides in the cell membrane. Its subcellular location is the endomembrane system. In terms of biological role, collaboratively with SUB and QKY, regulates cell growth anisotropy during gynoecium development, thus linking together cell-cell communication and cellular growth. The chain is Protein PAL OF QUIRKY from Arabidopsis thaliana (Mouse-ear cress).